The sequence spans 132 residues: Fatty acid-binding protein, adipocyte (132 aa).

The Nuclear localization signal signature appears at 22-32 (KELGVGFATRK). Residues arginine 107 and arginine 127 each coordinate (9Z,12Z)-octadecadienoate.

The protein belongs to the calycin superfamily. Fatty-acid binding protein (FABP) family. Monomer.

It localises to the cytoplasm. It is found in the nucleus. Functionally, lipid transport protein in adipocytes. Binds both long chain fatty acids and retinoic acid. Delivers long-chain fatty acids and retinoic acid to their cognate receptors in the nucleus. Has the highest binding affinity for linoleic acid and decreasing relative affinity for eicosapentaenoic acid (EPA), alpha-linolenic acid (ALA), docosahexaenoic acid (DHA), oleic acid, palmitic acid and stearic acid, respectively. This Pygoscelis papua (Gentoo penguin) protein is Fatty acid-binding protein, adipocyte.